Reading from the N-terminus, the 254-residue chain is Ribose-5-phosphate isomerase A (254 aa).

Residues 45–48 (TGST), 105–108 (DGAD), and 118–121 (KGGG) contribute to the substrate site. Glu127 acts as the Proton acceptor in catalysis. Lys145 contacts substrate.

Belongs to the ribose 5-phosphate isomerase family. Homodimer.

The enzyme catalyses aldehydo-D-ribose 5-phosphate = D-ribulose 5-phosphate. It functions in the pathway carbohydrate degradation; pentose phosphate pathway; D-ribose 5-phosphate from D-ribulose 5-phosphate (non-oxidative stage): step 1/1. Its function is as follows. Catalyzes the reversible conversion of ribose-5-phosphate to ribulose 5-phosphate. The sequence is that of Ribose-5-phosphate isomerase A from Treponema pallidum subsp. pallidum (strain SS14).